Consider the following 937-residue polypeptide: Aconitate hydratase A (937 aa).

A disordered region spans residues 410–450 (MANEGGFQPGSTSDLDNYNASWPGEGESAAANAEGRPSNPV). A compositionally biased stretch (polar residues) spans 418 to 429 (PGSTSDLDNYNA). Residues 433–444 (GEGESAAANAEG) show a composition bias toward low complexity. [4Fe-4S] cluster contacts are provided by cysteine 475, cysteine 541, and cysteine 544.

This sequence belongs to the aconitase/IPM isomerase family. In terms of assembly, monomer. Requires [4Fe-4S] cluster as cofactor.

The enzyme catalyses citrate = D-threo-isocitrate. It catalyses the reaction (2S,3R)-3-hydroxybutane-1,2,3-tricarboxylate = 2-methyl-cis-aconitate + H2O. Its pathway is carbohydrate metabolism; tricarboxylic acid cycle; isocitrate from oxaloacetate: step 2/2. It functions in the pathway organic acid metabolism; propanoate degradation. Functionally, involved in the catabolism of short chain fatty acids (SCFA) via the tricarboxylic acid (TCA)(acetyl degradation route) and probably via the 2-methylcitrate cycle I (propionate degradation route). Catalyzes the reversible isomerization of citrate to isocitrate via cis-aconitate. Could catalyze the hydration of 2-methyl-cis-aconitate to yield (2R,3S)-2-methylisocitrate. The apo form of AcnA functions as a RNA-binding regulatory protein. In Corynebacterium efficiens (strain DSM 44549 / YS-314 / AJ 12310 / JCM 11189 / NBRC 100395), this protein is Aconitate hydratase A (acn).